The sequence spans 493 residues: Alpha-amylase-related protein (493 aa).

Positions 1–19 (MFKFALALTLCLAGSLSLA) are cleaved as a signal peptide. Glutamine 20 bears the Pyrrolidone carboxylic acid mark. Cysteine 47 and cysteine 103 form a disulfide bridge. Ca(2+) contacts are provided by asparagine 117, glutamine 168, and aspartate 177. Cysteine 156 and cysteine 170 form a disulfide bridge. Arginine 205 is a binding site for chloride. Aspartate 207 functions as the Nucleophile in the catalytic mechanism. Histidine 211 lines the Ca(2+) pocket. Glutamate 244 (proton donor) is an active-site residue. Residues asparagine 307 and arginine 342 each contribute to the chloride site. Intrachain disulfides connect cysteine 375–cysteine 381, cysteine 417–cysteine 440, and cysteine 447–cysteine 459.

It belongs to the glycosyl hydrolase 13 family. In terms of assembly, monomer. Ca(2+) is required as a cofactor. The cofactor is chloride.

The protein localises to the secreted. It carries out the reaction Endohydrolysis of (1-&gt;4)-alpha-D-glucosidic linkages in polysaccharides containing three or more (1-&gt;4)-alpha-linked D-glucose units.. In Drosophila elegans (Fruit fly), this protein is Alpha-amylase-related protein (Amyrel).